The primary structure comprises 111 residues: MAKIQFSRGLDEEVIPEVRLTRSRTGDTGTATFIFTNPKILDQGTTEDITGMYLIDEEGEIITREVKGKFVNGRPEGVEAVYVMKSAQEWERFIRFMERYAQENDLGFSKS.

It belongs to the Psb28 family. In terms of assembly, part of the photosystem II complex.

It is found in the cellular thylakoid membrane. The protein is Photosystem II reaction center Psb28 protein of Trichormus variabilis (strain ATCC 29413 / PCC 7937) (Anabaena variabilis).